The sequence spans 161 residues: Large ribosomal subunit protein uL15 (161 aa).

Basic and acidic residues predominate over residues 1 to 13 (MKLNELRDNEGAA). Residues 1 to 51 (MKLNELRDNEGAARKKKRVARGPGSGKGKTAGRGIKGQKSRSGVALNGYEG) are disordered. Positions 23–35 (PGSGKGKTAGRGI) are enriched in gly residues.

Belongs to the universal ribosomal protein uL15 family. Part of the 50S ribosomal subunit.

Binds to the 23S rRNA. In Cereibacter sphaeroides (strain ATCC 17023 / DSM 158 / JCM 6121 / CCUG 31486 / LMG 2827 / NBRC 12203 / NCIMB 8253 / ATH 2.4.1.) (Rhodobacter sphaeroides), this protein is Large ribosomal subunit protein uL15.